The chain runs to 601 residues: Probable translation initiation factor IF-2 (601 aa).

The 218-residue stretch at leucine 10–leucine 227 folds into the tr-type G domain. Residues glycine 19–threonine 26 are G1. Position 19-26 (glycine 19–threonine 26) interacts with GTP. The tract at residues threonine 44–histidine 48 is G2. A G3 region spans residues aspartate 83–glycine 86. GTP is bound by residues aspartate 83–histidine 87 and asparagine 137–aspartate 140. Positions asparagine 137–aspartate 140 are G4. Positions serine 205–valine 207 are G5.

It belongs to the TRAFAC class translation factor GTPase superfamily. Classic translation factor GTPase family. IF-2 subfamily.

In terms of biological role, function in general translation initiation by promoting the binding of the formylmethionine-tRNA to ribosomes. Seems to function along with eIF-2. In Thermofilum pendens (strain DSM 2475 / Hrk 5), this protein is Probable translation initiation factor IF-2.